Consider the following 321-residue polypeptide: tRNA-dihydrouridine synthase B (321 aa).

Residues P16–A18 and Q70 each bind FMN. C100 functions as the Proton donor in the catalytic mechanism. Residues K139, N200–D202, and G224–R225 each bind FMN.

This sequence belongs to the Dus family. DusB subfamily. Requires FMN as cofactor.

It catalyses the reaction a 5,6-dihydrouridine in tRNA + NAD(+) = a uridine in tRNA + NADH + H(+). It carries out the reaction a 5,6-dihydrouridine in tRNA + NADP(+) = a uridine in tRNA + NADPH + H(+). In terms of biological role, catalyzes the synthesis of 5,6-dihydrouridine (D), a modified base found in the D-loop of most tRNAs, via the reduction of the C5-C6 double bond in target uridines. The polypeptide is tRNA-dihydrouridine synthase B (Yersinia pestis).